A 586-amino-acid chain; its full sequence is Probable zinc metalloprotease EGY3, chloroplastic (586 aa).

The transit peptide at 1–54 directs the protein to the chloroplast; it reads MASSSLVTSLLFSSSSSSNTATSTSSRRSFSLFSKNQYCKPRPLRRSSSRLLVR. 2 disordered regions span residues 13–32 and 58–122; these read SSSS…SFSL and QQQQ…DWRS. Residues 61–73 show a composition bias toward basic and acidic residues; that stretch reads QEEKAAPAAESHH. Residues 103 to 195 adopt a coiled-coil conformation; it reads VKKSKEELEE…NTFKALDLNK (93 aa). 7 helical membrane passes run 287–307, 318–338, 389–409, 427–447, 454–474, 506–526, and 550–570; these read LSAV…SGFF, VSDV…SEIA, ASAY…DGSL, PLLS…GNVL, VGVP…VTSL, VALG…WGLF, and YAWG…NGGG.

The protein belongs to the peptidase M50B family.

The protein localises to the plastid. The protein resides in the chloroplast membrane. Probable membrane-associated metalloprotease that may be involved in chloroplast development. This chain is Probable zinc metalloprotease EGY3, chloroplastic (EGY3), found in Oryza sativa subsp. japonica (Rice).